The chain runs to 216 residues: Large ribosomal subunit protein uL24m (216 aa).

The transit peptide at 1 to 9 (MRLSALLAL) directs the protein to the mitochondrion. The residue at position 24 (serine 24) is a Phosphoserine. One can recognise a KOW domain in the interval 56 to 89 (LFCGDRVEILEGKDAGKQGKVVQVIRQRNWVVVE).

This sequence belongs to the universal ribosomal protein uL24 family. Component of the mitochondrial ribosome large subunit (39S) which comprises a 16S rRNA and about 50 distinct proteins.

Its subcellular location is the mitochondrion. This is Large ribosomal subunit protein uL24m (MRPL24) from Bos taurus (Bovine).